The chain runs to 730 residues: Elongation factor 2 (730 aa).

Positions 19–229 (DYIRNIGIVA…NITFKDIIQY (211 aa)) constitute a tr-type G domain. Residues 28–35 (AHIDHGKT), 94–98 (DTPGH), and 148–151 (NKVD) each bind GTP. His597 carries the post-translational modification Diphthamide.

This sequence belongs to the TRAFAC class translation factor GTPase superfamily. Classic translation factor GTPase family. EF-G/EF-2 subfamily.

It is found in the cytoplasm. Functionally, catalyzes the GTP-dependent ribosomal translocation step during translation elongation. During this step, the ribosome changes from the pre-translocational (PRE) to the post-translocational (POST) state as the newly formed A-site-bound peptidyl-tRNA and P-site-bound deacylated tRNA move to the P and E sites, respectively. Catalyzes the coordinated movement of the two tRNA molecules, the mRNA and conformational changes in the ribosome. This Methanosphaera stadtmanae (strain ATCC 43021 / DSM 3091 / JCM 11832 / MCB-3) protein is Elongation factor 2.